Reading from the N-terminus, the 304-residue chain is Cell surface-binding protein OPG105 (304 aa).

Residues 1–235 enclose the Alpha-carbonic anhydrase domain; it reads MPQQLSPINI…NDDTQVYYSG (235 aa). At 1-275 the chain is on the virion surface side; that stretch reads MPQQLSPINI…YQKYIEENKT (275 aa). The helical transmembrane segment at 276–294 threads the bilayer; the sequence is FAIIAIVFVFILTAILFFM. Over 295-304 the chain is Intravirion; that stretch reads SRRYSREKQN.

This sequence belongs to the alpha-carbonic anhydrase family. As to quaternary structure, homodimer; disulfide-linked. Post-translationally, apparently non-glycosylated.

It localises to the virion membrane. Its function is as follows. Binds to chondroitin sulfate on the cell surface to provide virion attachment to target cell. The chain is Cell surface-binding protein OPG105 (OPG105) from Homo sapiens (Human).